A 388-amino-acid polypeptide reads, in one-letter code: Mannitol-1-phosphate 5-dehydrogenase (388 aa).

Residue 5–16 (AVHFGGGNIGRG) coordinates NAD(+). The active site involves lysine 213.

Belongs to the mannitol dehydrogenase family. As to quaternary structure, monomer.

The catalysed reaction is D-mannitol 1-phosphate + NAD(+) = beta-D-fructose 6-phosphate + NADH + H(+). Functionally, catalyzes the NAD(H)-dependent interconversion of D-fructose 6-phosphate and D-mannitol 1-phosphate in the mannitol metabolic pathway. The chain is Mannitol-1-phosphate 5-dehydrogenase from Coccidioides immitis (strain RS) (Valley fever fungus).